The primary structure comprises 510 residues: GMP synthase [glutamine-hydrolyzing] (510 aa).

One can recognise a Glutamine amidotransferase type-1 domain in the interval 5 to 195 (PILVVNFGSQ…IYGVCKAEKN (191 aa)). The active-site Nucleophile is Cys82. Active-site residues include His169 and Glu171. The GMPS ATP-PPase domain occupies 196-385 (WEMGDFIHEK…LGVPEEILRR (190 aa)). Position 223–229 (223–229 (SGGVDST)) interacts with ATP.

In terms of assembly, homodimer.

It catalyses the reaction XMP + L-glutamine + ATP + H2O = GMP + L-glutamate + AMP + diphosphate + 2 H(+). It participates in purine metabolism; GMP biosynthesis; GMP from XMP (L-Gln route): step 1/1. Its function is as follows. Catalyzes the synthesis of GMP from XMP. This Aquifex aeolicus (strain VF5) protein is GMP synthase [glutamine-hydrolyzing] (guaA).